We begin with the raw amino-acid sequence, 205 residues long: MDPFLVLLHSLSGSLSGNDLMELKFLCRERVSKRKLERVQSGLDLFTVLLEQNDLERGHTGLLRELLASLRRHDLLQRLDDFEAGTATAAPPGEADLQVAFDIVCDNVGRDWKRLARELKVSEAKMDGIEEKYPRSLSERVRESLKVWKNAEKKNASVAGLVKALRTCRLNLVADLVEEAQESVSKSENMSPVLRDSTVSSSETP.

One can recognise a DED domain in the interval 3–81; it reads PFLVLLHSLS…RHDLLQRLDD (79 aa). Residues 97-181 enclose the Death domain; the sequence is LQVAFDIVCD…LVADLVEEAQ (85 aa). The disordered stretch occupies residues 181-205; it reads QESVSKSENMSPVLRDSTVSSSETP. Ser-191 is modified (phosphoserine).

In terms of assembly, can self-associate. Component of the AIM2 PANoptosome complex, a multiprotein complex that drives inflammatory cell death (PANoptosis). Component of the death-induced signaling complex (DISC) composed of cell surface receptor FAS/CD95 or TNFRSF1A, adapter protein FADD and the CASP8 protease; recruitment of CASP8 to the complex is required for processing of CASP8 into the p18 and p10 subunits. Interacts (via death domain) with FAS (via death domain). Interacts directly (via DED domain) with NOL3 (via CARD domain); inhibits death-inducing signaling complex (DISC) assembly by inhibiting the increase in FAS-FADD binding induced by FAS activation. Interacts with CFLAR, PEA15 and MBD4. When phosphorylated, part of a complex containing HIPK3 and FAS. May interact with MAVS/IPS1. Interacts with MOCV v-CFLAR protein and PIDD1. Interacts with RIPK1 and TRADD. Interacts with stimulated TNFRSF10B. Interacts with DDX24.

It is found in the cytoplasm. In terms of biological role, apoptotic adapter molecule that recruits caspases CASP8 or CASP10 to the activated FAS/CD95 or TNFRSF1A/TNFR-1 receptors. The resulting aggregate called the death-inducing signaling complex (DISC) performs CASP8 proteolytic activation. Active CASP8 initiates the subsequent cascade of caspases mediating apoptosis. Involved in interferon-mediated antiviral immune response, playing a role in the positive regulation of interferon signaling. This Mus musculus (Mouse) protein is FAS-associated death domain protein.